The primary structure comprises 305 residues: Myb-like transcriptional regulator basR (305 aa).

Myb-like domains lie at 5–59 (RRRW…YNRF), 60–110 (TGGL…HHCL), and 111–162 (NPEL…TILS). The tract at residues 175–215 (PCCDSPSPSKSSRRPPSTPTSTPQVPGSRQGSSYDPYDYGS) is disordered. Residues 198–207 (QVPGSRQGSS) are compositionally biased toward polar residues.

It is found in the nucleus. Transcription regulator that acts as a central regulatory node for the integration of external bacterial signals leading to the regulation of secondary metabolite gene clusters such as orsellinic, lecanoric acid, cichorine, 2,4-dihydroxy-3-methyl-6-(2-oxopropyl)benzaldehyde (dba), emericellamide or microperfuranone clusters. In Emericella nidulans (strain FGSC A4 / ATCC 38163 / CBS 112.46 / NRRL 194 / M139) (Aspergillus nidulans), this protein is Myb-like transcriptional regulator basR.